The sequence spans 355 residues: GPN-loop GTPase 1 (355 aa).

The disordered stretch occupies residues 1–30; it reads MAEKAENLPSSSAEASEEPSPQTGPNVNQK. Low complexity predominate over residues 9–21; the sequence is PSSSAEASEEPSP. 40-45 is a GTP binding site; that stretch reads GSGKTT. The short motif at 97–99 is the Gly-Pro-Asn (GPN)-loop; involved in dimer interface element; it reads GPN. 200-203 is a GTP binding site; the sequence is NKAD. The stretch at 286 to 311 forms a coiled coil; that stretch reads EKVLAEKKLLDEEERKKRDEETLKGK.

This sequence belongs to the GPN-loop GTPase family. Heterodimer with GPN3. Binds to RNA polymerase II (RNAPII).

Its subcellular location is the cytoplasm. It is found in the nucleus. Its function is as follows. Small GTPase required for proper nuclear import of RNA polymerase II (RNAPII). May act at an RNAP assembly step prior to nuclear import. This chain is GPN-loop GTPase 1, found in Caenorhabditis elegans.